Reading from the N-terminus, the 503-residue chain is Glucosaminyl-phosphatidylinositol-acyltransferase PIGW (503 aa).

Residues 1-21 lie on the Lumenal side of the membrane; the sequence is MSQKQMKEAFVSNQNGTSVLE. Asn-15 is a glycosylation site (N-linked (GlcNAc...) asparagine). The helical transmembrane segment at 22–42 threads the bilayer; sequence ITEGLCLPALCILCRGLLIIL. The Cytoplasmic portion of the chain corresponds to 43–56; the sequence is SQQLCSSLHNSRTR. A helical membrane pass occupies residues 57-75; it reads FLVDFAFLIVPLVTTLTIF. The Lumenal portion of the chain corresponds to 76–78; it reads SSF. The helical transmembrane segment at 79-98 threads the bilayer; the sequence is VLLEYLVAIILGAGLLYEIY. At 99-131 the chain is on the cytoplasmic side; that stretch reads CRRTCYARMPFQKICEKFLKVSLESEHIPAISC. Residues 132–152 traverse the membrane as a helical segment; it reads FRVVNSAFTAVAILAVDFPLF. Residues 153–160 lie on the Lumenal side of the membrane; it reads PRRYAKTE. Residues 161–181 form a helical membrane-spanning segment; it reads LYGTGAMDYGVGGFIFGSAMV. At 182–201 the chain is on the cytoplasmic side; the sequence is SPEVRRKYTKGSRFCYLTKS. A helical membrane pass occupies residues 202 to 222; sequence LYSLWPLVFLGVGRLVAIKSV. The Lumenal portion of the chain corresponds to 223-236; it reads DYQEHLTEYGVHWN. Residues 237–257 traverse the membrane as a helical segment; it reads FFFTLIAVKLITSLLLLICPL. The Cytoplasmic portion of the chain corresponds to 258–259; sequence NR. A helical membrane pass occupies residues 260–280; it reads SWVVAISIAALYQLALDFTPL. The Lumenal portion of the chain corresponds to 281–304; the sequence is KSLILYGTDGSGTRVGLLNANREG. The helical transmembrane segment at 305-325 threads the bilayer; it reads IISVLGYVAVHMAGVQTGLYV. Residues 326-337 lie on the Cytoplasmic side of the membrane; it reads LKKRSHIKDWIK. Residues 338-358 form a helical membrane-spanning segment; the sequence is VACCILLTAIGLFISLYIVQV. Residues 359-369 are Lumenal-facing; it reads NVEVASRRMAN. Residues 370–390 form a helical membrane-spanning segment; the sequence is LAFCIWIVASCLILLSSLLLG. Topologically, residues 391-447 are cytoplasmic; that stretch reads DIILSFAKFVIKEAAVPCSWKLIQSPTANKKHLESIVFDAKRKEPTLCLITAMNRNQ. Ser-415 carries the phosphoserine modification. A helical transmembrane segment spans residues 448-468; sequence LLFFLLSNVTTGLVNLSIDTL. Residues 469–472 lie on the Lumenal side of the membrane; that stretch reads HSST. Residues 473 to 493 traverse the membrane as a helical segment; sequence PWALCLLNLYMFTNCLIIYVL. Over 494–503 the chain is Cytoplasmic; that stretch reads HLQDKTIKFW.

Belongs to the PIGW family.

It localises to the endoplasmic reticulum membrane. It participates in glycolipid biosynthesis; glycosylphosphatidylinositol-anchor biosynthesis. Acyltransferase that catalyzes the acyl transfer from an acyl-CoA at the 2-OH position of the inositol ring of glucosaminyl phosphatidylinositol (GlcN-PI) to generate glucosaminyl acyl phosphatidylinositol (GlcN-(acyl)PI) and participates in the fourth step of GPI-anchor biosynthesis. Required for the transport of GPI-anchored proteins to the plasma membrane. Acetylation during GPI-anchor biosynthesis is not essential for the subsequent mannosylation and is usually removed soon after the attachment of GPIs to proteins. This is Glucosaminyl-phosphatidylinositol-acyltransferase PIGW from Bos taurus (Bovine).